An 888-amino-acid chain; its full sequence is Leucine--tRNA ligase (888 aa).

The 'HIGH' region motif lies at 42 to 52 (PYPSGKLHMGH). The short motif at 640–644 (TMSKS) is the 'KMSKS' region element. K643 serves as a coordination point for ATP.

The protein belongs to the class-I aminoacyl-tRNA synthetase family.

The protein localises to the cytoplasm. It catalyses the reaction tRNA(Leu) + L-leucine + ATP = L-leucyl-tRNA(Leu) + AMP + diphosphate. The polypeptide is Leucine--tRNA ligase (Polaromonas naphthalenivorans (strain CJ2)).